Reading from the N-terminus, the 40-residue chain is Acyl-CoA-binding protein 2 (40 aa).

Basic and acidic residues predominate over residues 1-15; the sequence is ALKEEFEEHAEKAKT. The interval 1-25 is disordered; that stretch reads ALKEEFEEHAEKAKTLPENTSSENK. The 39-residue stretch at 2-40 folds into the ACB domain; that stretch reads LKEEFEEHAEKAKTLPENTSSENKLTLYGLYKQATVGNV.

The protein belongs to the ACBP family.

The protein localises to the cytoplasm. In terms of biological role, binds medium- and long-chain acyl-CoA esters with very high affinity and may function as an intracellular carrier of acyl-CoA esters. The polypeptide is Acyl-CoA-binding protein 2 (Digitalis lanata (Grecian foxglove)).